The chain runs to 143 residues: Large ribosomal subunit protein uL13 (143 aa).

This sequence belongs to the universal ribosomal protein uL13 family. As to quaternary structure, part of the 50S ribosomal subunit.

Functionally, this protein is one of the early assembly proteins of the 50S ribosomal subunit, although it is not seen to bind rRNA by itself. It is important during the early stages of 50S assembly. This Dehalococcoides mccartyi (strain ATCC BAA-2266 / KCTC 15142 / 195) (Dehalococcoides ethenogenes (strain 195)) protein is Large ribosomal subunit protein uL13.